Reading from the N-terminus, the 344-residue chain is tRNA N6-adenosine threonylcarbamoyltransferase (344 aa).

Residues H112 and H116 each coordinate Fe cation. Substrate contacts are provided by residues 134–138 (LASGG), D167, G180, and N280. Fe cation is bound at residue D308.

This sequence belongs to the KAE1 / TsaD family. It depends on Fe(2+) as a cofactor.

It is found in the cytoplasm. The enzyme catalyses L-threonylcarbamoyladenylate + adenosine(37) in tRNA = N(6)-L-threonylcarbamoyladenosine(37) in tRNA + AMP + H(+). Its function is as follows. Required for the formation of a threonylcarbamoyl group on adenosine at position 37 (t(6)A37) in tRNAs that read codons beginning with adenine. Is involved in the transfer of the threonylcarbamoyl moiety of threonylcarbamoyl-AMP (TC-AMP) to the N6 group of A37, together with TsaE and TsaB. TsaD likely plays a direct catalytic role in this reaction. This chain is tRNA N6-adenosine threonylcarbamoyltransferase, found in Rickettsia massiliae (strain Mtu5).